Reading from the N-terminus, the 338-residue chain is Glutaminase (338 aa).

Residues Ser-80, Asn-130, Glu-174, Asn-181, Tyr-205, Tyr-257, and Val-275 each coordinate substrate.

This sequence belongs to the glutaminase family. In terms of assembly, homotetramer.

The catalysed reaction is L-glutamine + H2O = L-glutamate + NH4(+). This chain is Glutaminase, found in Microcystis aeruginosa (strain NIES-843 / IAM M-2473).